A 96-amino-acid polypeptide reads, in one-letter code: Dynein light chain roadblock-type 1 (96 aa).

N-acetylalanine is present on alanine 2.

This sequence belongs to the GAMAD family. In terms of assembly, homodimer. The cytoplasmic dynein 1 complex consists of two catalytic heavy chains (HCs) and a number of non-catalytic subunits presented by intermediate chains (ICs), light intermediate chains (LICs) and light chains (LCs); the composition seems to vary in respect to the IC, LIC and LC composition. The heavy chain homodimer serves as a scaffold for the probable homodimeric assembly of the respective non-catalytic subunits. The ICs and LICs bind directly to the HC dimer and the LCs assemble on the IC dimer. Interacts with DYNLRB2. Interacts with DYNC1I1 and DYNC1I2. Interacts with RAB6A isoform 1 (GTP-bound); the interaction is direct. Interacts with RAB6A isoform 2 (GDP-bound); the interaction is direct. Interacts with RAB6B (GDP-bound). High expression in heart, liver, brain and pancreas; moderate in placenta, skeletal muscle and kidney; low in lung, prostate, testis, small intestine and colon. Isoform 1 expression is up-regulated in 64% hepatocellular carcinoma (HCC) patients.

The protein localises to the cytoplasm. The protein resides in the cytoskeleton. In terms of biological role, acts as one of several non-catalytic accessory components of the cytoplasmic dynein 1 complex that are thought to be involved in linking dynein to cargos and to adapter proteins that regulate dynein function. Cytoplasmic dynein 1 acts as a motor for the intracellular retrograde motility of vesicles and organelles along microtubules. The chain is Dynein light chain roadblock-type 1 from Homo sapiens (Human).